Consider the following 454-residue polypeptide: Putative F-box/LRR-repeat protein At3g58880 (454 aa).

The region spanning 2–48 is the F-box domain; it reads VDLVSSLPDDLLGHILSLLTTKEAALTSILSKRWRYLIAFVPYLEFD. LRR repeat units follow at residues 77–102, 144–168, 169–194, 214–240, 270–301, 303–327, and 328–353; these read LALH…DLLN, SGCR…TLDS, VSWS…NLAN, IKSV…NYTA, LVSV…YLSP, TLQV…VIES, and SMDI…VIKG.

This is Putative F-box/LRR-repeat protein At3g58880 from Arabidopsis thaliana (Mouse-ear cress).